A 294-amino-acid chain; its full sequence is Protoheme IX farnesyltransferase (294 aa).

Transmembrane regions (helical) follow at residues 24–44, 48–68, 96–116, 118–138, 146–166, 172–192, 224–244, 245–265, and 268–288; these read VVLLMLLTVIVGMYLAAPGWV, LIAFTLLGIGLCAGSAAAINH, ALWFAVIIGLMGLSLLILFVN, LTALLTFVTLIGYAGVYTGYL, IVIGGLAGAAPPLLGWTAVTG, ALLLVLIIFTWTPPHFWALAI, VLLLVVSLLPFVVSMSGWIYL, LGALVLGIRFLVWAHKLYFTD, and VVAMQTFRFSILYLMLLFVFL.

It belongs to the UbiA prenyltransferase family. Protoheme IX farnesyltransferase subfamily.

Its subcellular location is the cell inner membrane. The catalysed reaction is heme b + (2E,6E)-farnesyl diphosphate + H2O = Fe(II)-heme o + diphosphate. It participates in porphyrin-containing compound metabolism; heme O biosynthesis; heme O from protoheme: step 1/1. Converts heme B (protoheme IX) to heme O by substitution of the vinyl group on carbon 2 of heme B porphyrin ring with a hydroxyethyl farnesyl side group. The protein is Protoheme IX farnesyltransferase of Legionella pneumophila (strain Paris).